The primary structure comprises 877 residues: Telomere length regulation protein clk-2 (877 aa).

Polar residues predominate over residues Asn-488 to Arg-501. Positions Asn-488 to Asp-509 are disordered.

This sequence belongs to the TEL2 family.

The protein localises to the nucleus. It is found in the chromosome. It localises to the telomere. Functionally, DNA damage checkpoint protein required for DNA damage-induced cell cycle arrest and apoptosis, thereby playing a role in genome stability. Regulator of telomere length. The polypeptide is Telomere length regulation protein clk-2 (clk-2) (Caenorhabditis elegans).